The sequence spans 172 residues: Stellate protein CG33247 (172 aa).

It belongs to the casein kinase 2 subunit beta family. Interacts in vitro with the casein kinase 2 alpha subunit (CkII-alpha). The relevance of such interaction is however unclear in vivo. As to expression, probably not expressed in wild-type flies. In males lacking the Y chromosome, it is testis-specific and constitutes the main component of star-shaped crystals.

Functionally, unknown. In males lacking the Y chromosome, its strong overexpression leads to the appearance of proteinaceous star-shaped crystals in the primary spermatocytes causing meiotic drive, possibly by interfering with normal casein kinase 2 activity. This is Stellate protein CG33247 (Ste:CG33247) from Drosophila melanogaster (Fruit fly).